Here is a 231-residue protein sequence, read N- to C-terminus: Uracil-DNA glycosylase (231 aa).

Asp70 (proton acceptor) is an active-site residue.

This sequence belongs to the uracil-DNA glycosylase (UDG) superfamily. UNG family.

The protein localises to the cytoplasm. The enzyme catalyses Hydrolyzes single-stranded DNA or mismatched double-stranded DNA and polynucleotides, releasing free uracil.. Functionally, excises uracil residues from the DNA which can arise as a result of misincorporation of dUMP residues by DNA polymerase or due to deamination of cytosine. This chain is Uracil-DNA glycosylase, found in Pseudomonas fluorescens (strain Pf0-1).